Reading from the N-terminus, the 892-residue chain is E3 ubiquitin ligase PQT3-like (892 aa).

A DWNN domain is found at 3 to 76; that stretch reads IYYKFKSARD…NTSVLIRRVP (74 aa). A CCHC-type zinc finger spans residues 210–224; it reads CHRCNIPGHFIQHCP. Phosphoserine is present on serine 285. The RING-type; degenerate zinc finger occupies 295–333; that stretch reads CPLCKEVMKDAALTSKCCYKSFCDKCIRDHIISKSMCVC. Disordered regions lie at residues 375 to 408, 459 to 493, and 623 to 892; these read DLES…NNND, TQAP…MQWN, and MLRK…RSRA. Serine 404 carries the phosphoserine modification. The segment covering 623-644 has biased composition (basic and acidic residues); the sequence is MLRKRENERRPEGGKMFRDGEN. Over residues 647–666 the composition is skewed to polar residues; the sequence is MMMNNGTSASASSINPNKSR. The segment covering 674–692 has biased composition (basic and acidic residues); the sequence is HDYDRRRRPEKRLSPEHPP. The short motif at 693-700 is the Nuclear localization signal element; it reads TRKNISPS. Residues 708-745 show a composition bias toward basic and acidic residues; the sequence is ERYPDERDRQRDRERSRHQDVDREHDRTRDRRDEDRSR. Residues 810-832 show a composition bias toward low complexity; that stretch reads SSSSTSVTDPSASASAAAAVGTS. Serine 866 is modified (phosphoserine). Positions 875–892 are enriched in basic and acidic residues; that stretch reads SEDKLRYSKRGKGERSRA.

It localises to the nucleus. It catalyses the reaction S-ubiquitinyl-[E2 ubiquitin-conjugating enzyme]-L-cysteine + [acceptor protein]-L-lysine = [E2 ubiquitin-conjugating enzyme]-L-cysteine + N(6)-ubiquitinyl-[acceptor protein]-L-lysine.. In Arabidopsis thaliana (Mouse-ear cress), this protein is E3 ubiquitin ligase PQT3-like.